A 418-amino-acid chain; its full sequence is Tyrosine--tRNA ligase (418 aa).

Tyr34 lines the L-tyrosine pocket. Residues Pro39 to His48 carry the 'HIGH' region motif. Positions 169 and 173 each coordinate L-tyrosine. The 'KMSKS' region signature appears at Lys229–Ser233. Lys232 lines the ATP pocket. The S4 RNA-binding domain maps to Asn352–Tyr418.

This sequence belongs to the class-I aminoacyl-tRNA synthetase family. TyrS type 1 subfamily. Homodimer.

The protein resides in the cytoplasm. The enzyme catalyses tRNA(Tyr) + L-tyrosine + ATP = L-tyrosyl-tRNA(Tyr) + AMP + diphosphate + H(+). Its function is as follows. Catalyzes the attachment of tyrosine to tRNA(Tyr) in a two-step reaction: tyrosine is first activated by ATP to form Tyr-AMP and then transferred to the acceptor end of tRNA(Tyr). The chain is Tyrosine--tRNA ligase from Streptococcus pneumoniae (strain ATCC BAA-255 / R6).